The primary structure comprises 481 residues: UDP-N-acetylmuramate--L-alanine ligase (481 aa).

115 to 121 contributes to the ATP binding site; sequence GTHGKTT.

Belongs to the MurCDEF family.

It is found in the cytoplasm. It catalyses the reaction UDP-N-acetyl-alpha-D-muramate + L-alanine + ATP = UDP-N-acetyl-alpha-D-muramoyl-L-alanine + ADP + phosphate + H(+). The protein operates within cell wall biogenesis; peptidoglycan biosynthesis. Cell wall formation. The polypeptide is UDP-N-acetylmuramate--L-alanine ligase (Granulibacter bethesdensis (strain ATCC BAA-1260 / CGDNIH1)).